Here is a 197-residue protein sequence, read N- to C-terminus: Thymidine kinase (197 aa).

ATP is bound by residues 9–16 (SAMDAGKT) and 87–90 (DEIH). The Proton acceptor role is filled by Glu88. 4 residues coordinate Zn(2+): Cys145, Cys147, Cys187, and His190.

This sequence belongs to the thymidine kinase family. As to quaternary structure, homotetramer.

Its subcellular location is the cytoplasm. The enzyme catalyses thymidine + ATP = dTMP + ADP + H(+). This is Thymidine kinase from Francisella tularensis subsp. holarctica (strain LVS).